A 295-amino-acid chain; its full sequence is Mediator of RNA polymerase II transcription subunit 27 (295 aa).

It belongs to the Mediator complex subunit 27 family. As to quaternary structure, component of the Mediator complex.

Its subcellular location is the nucleus. Its function is as follows. Component of the Mediator complex, a coactivator involved in the regulated transcription of nearly all RNA polymerase II-dependent genes. Mediator functions as a bridge to convey information from gene-specific regulatory proteins to the basal RNA polymerase II transcription machinery. Mediator is recruited to promoters by direct interactions with regulatory proteins and serves as a scaffold for the assembly of a functional preinitiation complex with RNA polymerase II and the general transcription factors. The chain is Mediator of RNA polymerase II transcription subunit 27 (MED27) from Aedes aegypti (Yellowfever mosquito).